The chain runs to 205 residues: Inactive ribonuclease-like protein 9 (205 aa).

The first 26 residues, 1-26 (MMRTLITIHPLPLLLLLQQLLQPVQF), serve as a signal peptide directing secretion. Disulfide bonds link Cys-98–Cys-153, Cys-116–Cys-168, and Cys-123–Cys-130. N-linked (GlcNAc...) asparagine glycans are attached at residues Asn-131 and Asn-143.

Belongs to the pancreatic ribonuclease family.

The protein resides in the secreted. In terms of biological role, does not exhibit any ribonuclease activity. This Gorilla gorilla gorilla (Western lowland gorilla) protein is Inactive ribonuclease-like protein 9 (RNASE9).